The sequence spans 367 residues: Leucine-rich repeat-containing protein 28 (367 aa).

LRR repeat units follow at residues 16–36 (KHKN…ELLK), 42–63 (HLER…LAQK), 66–87 (NLVE…IGSL), 89–111 (KLQC…GGLR), 112–133 (ALRH…VGDL), 135–156 (ELQT…LHLC), 158–180 (SLQY…CQLP), 181–202 (SLNE…LGRS), and 204–226 (ELQY…LYNK).

The sequence is that of Leucine-rich repeat-containing protein 28 (Lrrc28) from Mus musculus (Mouse).